Here is a 134-residue protein sequence, read N- to C-terminus: Methylglyoxal synthase (134 aa).

Positions 1–134 constitute an MGS-like domain; the sequence is MNIALIAHDN…DWRERVKERG (134 aa). Residues histidine 8, lysine 12, 34–37, and 54–55 each bind substrate; these read TGTT and SG. Aspartate 60 acts as the Proton donor/acceptor in catalysis. Histidine 87 contacts substrate.

The protein belongs to the methylglyoxal synthase family.

It carries out the reaction dihydroxyacetone phosphate = methylglyoxal + phosphate. Functionally, catalyzes the formation of methylglyoxal from dihydroxyacetone phosphate. This chain is Methylglyoxal synthase, found in Alkaliphilus metalliredigens (strain QYMF).